A 106-amino-acid polypeptide reads, in one-letter code: Somatoliberin (106 aa).

Residues 1 to 19 (MLLWVFFLVTLTLSSGSHG) form the signal peptide. The propeptide occupies 20-30 (SLPSQPLRIPR). Leucine 74 is modified (leucine amide). Positions 77-106 (QVDGVWTDQQQMALESTLVSLLQERRNSQG) are excised as a propeptide.

The protein belongs to the glucagon family.

The protein localises to the secreted. Its function is as follows. GRF is released by the hypothalamus and acts on the adenohypophyse to stimulate the secretion of growth hormone. The chain is Somatoliberin (GHRH) from Bos taurus (Bovine).